The following is a 368-amino-acid chain: 2-aminoethylphosphonate--pyruvate transaminase (368 aa).

Lysine 192 carries the N6-(pyridoxal phosphate)lysine modification.

This sequence belongs to the class-V pyridoxal-phosphate-dependent aminotransferase family. PhnW subfamily. As to quaternary structure, homodimer. Pyridoxal 5'-phosphate serves as cofactor.

The catalysed reaction is (2-aminoethyl)phosphonate + pyruvate = phosphonoacetaldehyde + L-alanine. Involved in phosphonate degradation. The protein is 2-aminoethylphosphonate--pyruvate transaminase of Pseudomonas putida (strain GB-1).